Reading from the N-terminus, the 160-residue chain is UPF0225 protein CGSHiGG_04185 (160 aa).

The protein belongs to the UPF0225 family.

The chain is UPF0225 protein CGSHiGG_04185 from Haemophilus influenzae (strain PittGG).